The chain runs to 379 residues: RNA-splicing ligase RtcB2 (379 aa).

D74, C77, H137, H168, and H239 together coordinate Mn(2+). 136–140 serves as a coordination point for GMP; sequence NHFVE. Residues 239 to 240, S277, 294 to 297, and K372 contribute to the GMP site; these read HN and HGAG. Residue H294 is the GMP-histidine intermediate of the active site.

It belongs to the RtcB family. RtcB2 subfamily. Mn(2+) is required as a cofactor.

The enzyme catalyses a 3'-end 3'-phospho-ribonucleotide-RNA + a 5'-end dephospho-ribonucleoside-RNA + GTP = a ribonucleotidyl-ribonucleotide-RNA + GMP + diphosphate. In terms of biological role, GTP-dependent RNA ligase involved in rRNA repair. Repairs damaged 16S rRNA in 30S subunits that has been cleaved between adenine-1493 and guanosine-1494 (E.coli nubering). This specific cleavage is inflicted by CdiA (ECL_04451) or by colicin E3-type (ColE3) proteins. Poorly repairs damaged rRNA in the 70S ribosome; addition of release factor PrfH improves repair about 3-fold in vitro, probably because PrfH hydrolyzes the nascent chain allowing ribosomal subunit dissociation. In vivo the PrfH-RtcB2 pair restores growth in the presence of ribotoxins that specifically create this damage. Does not repair damaged tRNA (tested with tRNA(Asp) and tRNA(Arg)). The protein is RNA-splicing ligase RtcB2 of Escherichia coli (strain ATCC 25922 / DSM 1103 / LMG 8223 / NCIMB 12210 / NCTC 12241 / WDCM 00013 / Seattle 1946).